The primary structure comprises 199 residues: Imidazole glycerol phosphate synthase subunit HisH (199 aa).

The 198-residue stretch at 2–199 (RAVIIDYGVG…LTNVYRWLRK (198 aa)) folds into the Glutamine amidotransferase type-1 domain. The active-site Nucleophile is the C76. Residues H178 and E180 contribute to the active site.

Heterodimer of HisH and HisF.

The protein localises to the cytoplasm. The enzyme catalyses 5-[(5-phospho-1-deoxy-D-ribulos-1-ylimino)methylamino]-1-(5-phospho-beta-D-ribosyl)imidazole-4-carboxamide + L-glutamine = D-erythro-1-(imidazol-4-yl)glycerol 3-phosphate + 5-amino-1-(5-phospho-beta-D-ribosyl)imidazole-4-carboxamide + L-glutamate + H(+). The catalysed reaction is L-glutamine + H2O = L-glutamate + NH4(+). It participates in amino-acid biosynthesis; L-histidine biosynthesis; L-histidine from 5-phospho-alpha-D-ribose 1-diphosphate: step 5/9. In terms of biological role, IGPS catalyzes the conversion of PRFAR and glutamine to IGP, AICAR and glutamate. The HisH subunit catalyzes the hydrolysis of glutamine to glutamate and ammonia as part of the synthesis of IGP and AICAR. The resulting ammonia molecule is channeled to the active site of HisF. This Sulfolobus acidocaldarius (strain ATCC 33909 / DSM 639 / JCM 8929 / NBRC 15157 / NCIMB 11770) protein is Imidazole glycerol phosphate synthase subunit HisH.